A 62-amino-acid chain; its full sequence is Ferredoxin-3 (62 aa).

2 consecutive 4Fe-4S ferredoxin-type domains span residues 2–28 and 29–62; these read SLKI…SAGS and DIYV…IVKA. Residues cysteine 9, cysteine 12, cysteine 15, cysteine 19, cysteine 38, cysteine 41, cysteine 50, and cysteine 54 each coordinate [4Fe-4S] cluster.

The cofactor is [4Fe-4S] cluster.

In terms of biological role, ferredoxins are iron-sulfur proteins that transfer electrons in a wide variety of metabolic reactions. This is Ferredoxin-3 from Chlorobaculum tepidum (strain ATCC 49652 / DSM 12025 / NBRC 103806 / TLS) (Chlorobium tepidum).